A 94-amino-acid chain; its full sequence is Trp operon repressor homolog (94 aa).

A DNA-binding region spans residues 58–81 (QREIAEKYGVSIAQITRGSNALKG).

It belongs to the TrpR family. Homodimer.

It localises to the cytoplasm. This protein is an aporepressor. When complexed with L-tryptophan it binds the operator region of the trp operon and prevents the initiation of transcription. This chain is Trp operon repressor homolog, found in Chlamydia trachomatis serovar A (strain ATCC VR-571B / DSM 19440 / HAR-13).